The primary structure comprises 491 residues: UDP-N-acetylmuramate--L-alanine ligase (491 aa).

Position 126-132 (126-132 (GTHGKTT)) interacts with ATP.

The protein belongs to the MurCDEF family.

Its subcellular location is the cytoplasm. It carries out the reaction UDP-N-acetyl-alpha-D-muramate + L-alanine + ATP = UDP-N-acetyl-alpha-D-muramoyl-L-alanine + ADP + phosphate + H(+). It functions in the pathway cell wall biogenesis; peptidoglycan biosynthesis. Cell wall formation. In Salmonella agona (strain SL483), this protein is UDP-N-acetylmuramate--L-alanine ligase.